Reading from the N-terminus, the 56-residue chain is uncharacterized protein (56 aa).

This is an uncharacterized protein from Haemophilus influenzae (strain ATCC 51907 / DSM 11121 / KW20 / Rd).